A 371-amino-acid chain; its full sequence is MEVSSEQQLFFMREAVALGERGRIFAPPNPWVGCVIVKNGCIIGRGWHKGIGSPHAEVCAFQDQTSSLVGADVYVTLEPCCHFGRTPPCVDLLIKSKVSSVYIALLDPDPRVCKRGVARLKEAGISVYVGIGHEEAKASLQPYLHQRETGLPWVVMKTAASLDGQTSDRRGISQWISGEQARLDVGRLRAESQAVIVGSRTVCLDNPRLSARMPSGDLYERQPLRVVVDSRGSVPLDARVWNPDSGNVLLATTEQCSKEHIQKLEDRGVEVWKSSPQQVDLKRLLQYLAEKGCLQVLVEGGARLHSAFWREHLVNAGVIYWGPKFLGDQGSPMLRDLQLCLDNAEHVKITKTFLVGDSVKTCFECVGREDG.

The segment at 1–150 (MEVSSEQQLF…QPYLHQRETG (150 aa)) is deaminase. A CMP/dCMP-type deaminase domain is found at 6–128 (EQQLFFMREA…RLKEAGISVY (123 aa)). H55 provides a ligand contact to Zn(2+). The Proton donor role is filled by E57. Residues C80 and C89 each coordinate Zn(2+). Positions 151 to 371 (LPWVVMKTAA…CFECVGREDG (221 aa)) are reductase. A159 lines the NADP(+) pocket. Residue S173 coordinates substrate. Residue W175 coordinates NADP(+). Position 189 (R189) interacts with substrate. 2 residues coordinate NADP(+): T201 and D205. 2 residues coordinate substrate: L209 and R212. Position 230 (S230) interacts with NADP(+). E299 lines the substrate pocket. 301-307 (GARLHSA) provides a ligand contact to NADP(+).

It in the N-terminal section; belongs to the cytidine and deoxycytidylate deaminase family. In the C-terminal section; belongs to the HTP reductase family. The cofactor is Zn(2+).

The catalysed reaction is 2,5-diamino-6-hydroxy-4-(5-phosphoribosylamino)-pyrimidine + H2O + H(+) = 5-amino-6-(5-phospho-D-ribosylamino)uracil + NH4(+). It catalyses the reaction 5-amino-6-(5-phospho-D-ribitylamino)uracil + NADP(+) = 5-amino-6-(5-phospho-D-ribosylamino)uracil + NADPH + H(+). The protein operates within cofactor biosynthesis; riboflavin biosynthesis; 5-amino-6-(D-ribitylamino)uracil from GTP: step 2/4. It participates in cofactor biosynthesis; riboflavin biosynthesis; 5-amino-6-(D-ribitylamino)uracil from GTP: step 3/4. Converts 2,5-diamino-6-(ribosylamino)-4(3h)-pyrimidinone 5'-phosphate into 5-amino-6-(ribosylamino)-2,4(1h,3h)-pyrimidinedione 5'-phosphate. In Chlamydia muridarum (strain MoPn / Nigg), this protein is Riboflavin biosynthesis protein RibD (ribD).